Consider the following 188-residue polypeptide: dCTP deaminase (188 aa).

DCTP-binding positions include Lys111–Arg116, Thr135–Glu137, Gln156, Tyr170, and Gln180. Residue Glu137 is the Proton donor/acceptor of the active site.

This sequence belongs to the dCTP deaminase family. As to quaternary structure, homotrimer.

The catalysed reaction is dCTP + H2O + H(+) = dUTP + NH4(+). Its pathway is pyrimidine metabolism; dUMP biosynthesis; dUMP from dCTP (dUTP route): step 1/2. Catalyzes the deamination of dCTP to dUTP. The chain is dCTP deaminase from Pseudomonas syringae pv. tomato (strain ATCC BAA-871 / DC3000).